Reading from the N-terminus, the 416-residue chain is Lipid phosphate phosphatase delta (416 aa).

2 helical membrane-spanning segments follow: residues 72 to 92 and 104 to 124; these read FFSGLSCVVSVPFYTAFLPLL and MTLLIAFCDYLGNCIKDVVSA. The tract at residues 119 to 127 is phosphatase sequence motif I; sequence KDVVSAPRP. Residues 151–154 form a phosphatase sequence motif II region; the sequence is PSSH. The Proton donor role is filled by His-154. A helical transmembrane segment spans residues 178 to 198; the sequence is VSIQYYGFALACLLVALIAFG. Residues 198–209 form a phosphatase sequence motif III region; the sequence is GRVYLGMHSVVD. The Nucleophile role is filled by His-205. Transmembrane regions (helical) follow at residues 207–227, 241–261, 266–286, 302–322, and 393–413; these read VVDIVSGLAIGVLILGLWLTV, VSSFWTALSFLLLFAYPTPEH, YEYHTAFNGVTLGIVTGVQQT, ELPISSYLGRVMVGIPTILLV, and FFQYAGLAWSVVDLVPSLFSY.

Belongs to the type 2 lipid phosphate phosphatase family.

It is found in the endoplasmic reticulum membrane. In terms of biological role, functions as a sphingoid long-chain base phosphate (LCBP) phosphatase. May play a role in the regulation of LCBP levels and be involved in stomatal responses through LCBP-mediated ABA signaling. In Arabidopsis thaliana (Mouse-ear cress), this protein is Lipid phosphate phosphatase delta (LPPD).